The primary structure comprises 338 residues: L-serine dehydratase (338 aa).

Lys-39 carries the N6-(pyridoxal phosphate)lysine modification.

It belongs to the serine/threonine dehydratase family. Requires pyridoxal 5'-phosphate as cofactor.

The protein resides in the cytoplasm. The enzyme catalyses L-serine = pyruvate + NH4(+). It functions in the pathway carbohydrate biosynthesis; gluconeogenesis. The sequence is that of L-serine dehydratase (SDL1) from Saccharomyces cerevisiae (strain AWRI1631) (Baker's yeast).